The following is a 121-amino-acid chain: Type II secretion system protein I (121 aa).

Positions methionine 1–glycine 6 are cleaved as a propeptide — leader sequence. N-methylmethionine is present on methionine 7. A helical transmembrane segment spans residues methionine 7–leucine 27.

It belongs to the GSP I family. As to quaternary structure, type II secretion is composed of four main components: the outer membrane complex, the inner membrane complex, the cytoplasmic secretion ATPase and the periplasm-spanning pseudopilus. Interacts with core component PulG. Interacts with pseudopilins PulJ and PulK. Cleaved by prepilin peptidase. Post-translationally, methylated by prepilin peptidase at the amino group of the N-terminal methionine once the leader sequence is cleaved by prepilin peptidase.

The protein localises to the cell inner membrane. Functionally, component of the type II secretion system required for the energy-dependent secretion of extracellular factors such as proteases and toxins from the periplasm. Part of the pseudopilus tip complex that is critical for the recognition and binding of secretion substrates. The chain is Type II secretion system protein I (pulI) from Klebsiella michiganensis (strain ATCC 8724 / DSM 4798 / JCM 20051 / NBRC 3318 / NRRL B-199 / KCTC 1686 / BUCSAV 143 / CCM 1901).